A 211-amino-acid polypeptide reads, in one-letter code: N-(5'-phosphoribosyl)anthranilate isomerase (211 aa).

This sequence belongs to the TrpF family.

It carries out the reaction N-(5-phospho-beta-D-ribosyl)anthranilate = 1-(2-carboxyphenylamino)-1-deoxy-D-ribulose 5-phosphate. It participates in amino-acid biosynthesis; L-tryptophan biosynthesis; L-tryptophan from chorismate: step 3/5. The sequence is that of N-(5'-phosphoribosyl)anthranilate isomerase from Pseudomonas aeruginosa (strain LESB58).